A 127-amino-acid polypeptide reads, in one-letter code: Major sperm protein 77/79 (127 aa).

An N-acetylalanine modification is found at A2. The 118-residue stretch at 9 to 126 folds into the MSP domain; that stretch reads DIQTQPGTKI…RRKNLPIEYN (118 aa).

Sperm.

The protein resides in the cell projection. It localises to the pseudopodium. Its subcellular location is the cytoplasm. The protein localises to the cytoskeleton. Central component in molecular interactions underlying sperm crawling. Forms an extensive filament system that extends from sperm villipoda, along the leading edge of the pseudopod. In Caenorhabditis elegans, this protein is Major sperm protein 77/79 (msp-77).